We begin with the raw amino-acid sequence, 87 residues long: Phosphoribosyl-ATP pyrophosphatase (87 aa).

This sequence belongs to the PRA-PH family.

It localises to the cytoplasm. The catalysed reaction is 1-(5-phospho-beta-D-ribosyl)-ATP + H2O = 1-(5-phospho-beta-D-ribosyl)-5'-AMP + diphosphate + H(+). The protein operates within amino-acid biosynthesis; L-histidine biosynthesis; L-histidine from 5-phospho-alpha-D-ribose 1-diphosphate: step 2/9. The protein is Phosphoribosyl-ATP pyrophosphatase of Thermobifida fusca (strain YX).